A 315-amino-acid polypeptide reads, in one-letter code: Methionyl-tRNA formyltransferase (315 aa).

113–116 contributes to the (6S)-5,6,7,8-tetrahydrofolate binding site; sequence SILP.

Belongs to the Fmt family.

It catalyses the reaction L-methionyl-tRNA(fMet) + (6R)-10-formyltetrahydrofolate = N-formyl-L-methionyl-tRNA(fMet) + (6S)-5,6,7,8-tetrahydrofolate + H(+). Its function is as follows. Attaches a formyl group to the free amino group of methionyl-tRNA(fMet). The formyl group appears to play a dual role in the initiator identity of N-formylmethionyl-tRNA by promoting its recognition by IF2 and preventing the misappropriation of this tRNA by the elongation apparatus. This is Methionyl-tRNA formyltransferase from Vibrio vulnificus (strain CMCP6).